The following is a 266-amino-acid chain: 14-3-3 protein homolog (266 aa).

Positions 154-177 (KQAADQAQESYQKATETAEGHSPA) are disordered. Positions 158–168 (DQAQESYQKAT) are enriched in polar residues.

This sequence belongs to the 14-3-3 family.

This chain is 14-3-3 protein homolog, found in Neospora caninum (Coccidian parasite).